Here is a 397-residue protein sequence, read N- to C-terminus: Acetyl-CoA acetyltransferase, cytosolic (397 aa).

At methionine 1 the chain carries N-acetylmethionine. The Acyl-thioester intermediate role is filled by cysteine 92. An N6-acetyllysine modification is found at lysine 200. CoA is bound by residues arginine 223 and serine 226. N6-acetyllysine is present on residues lysine 233 and lysine 235. Serine 252 contributes to the CoA binding site. Cysteine 383 acts as the Proton donor/acceptor in catalysis.

It belongs to the thiolase-like superfamily. Thiolase family. As to quaternary structure, homotetramer.

It localises to the cytoplasm. Its subcellular location is the cytosol. It catalyses the reaction 2 acetyl-CoA = acetoacetyl-CoA + CoA. The protein operates within lipid metabolism; fatty acid metabolism. Its function is as follows. Involved in the biosynthetic pathway of cholesterol. The protein is Acetyl-CoA acetyltransferase, cytosolic (Acat2) of Rattus norvegicus (Rat).